The sequence spans 907 residues: Translation initiation factor IF-2 (907 aa).

Residues 26–317 (DAGMKKSSSD…KPKSMQHGFD (292 aa)) form a disordered region. Basic and acidic residues-rich tracts occupy residues 28–44 (GMKK…EKQK) and 101–248 (SAIE…DTDY). Residues 299-308 (KGGRKGKLSK) show a composition bias toward basic residues. Positions 406–575 (PRAPVVTIMG…LLQAEVLELT (170 aa)) constitute a tr-type G domain. The interval 415 to 422 (GHVDHGKT) is G1. 415–422 (GHVDHGKT) is a binding site for GTP. The interval 440-444 (GITQH) is G2. The interval 461–464 (DTPG) is G3. Residues 461-465 (DTPGH) and 515-518 (NKID) each bind GTP. The segment at 515–518 (NKID) is G4. The segment at 551–553 (SAK) is G5.

This sequence belongs to the TRAFAC class translation factor GTPase superfamily. Classic translation factor GTPase family. IF-2 subfamily.

It localises to the cytoplasm. Functionally, one of the essential components for the initiation of protein synthesis. Protects formylmethionyl-tRNA from spontaneous hydrolysis and promotes its binding to the 30S ribosomal subunits. Also involved in the hydrolysis of GTP during the formation of the 70S ribosomal complex. The sequence is that of Translation initiation factor IF-2 from Vibrio vulnificus (strain YJ016).